The chain runs to 229 residues: UPF0173 metal-dependent hydrolase SAOUHSC_01815 (229 aa).

This sequence belongs to the UPF0173 family.

The sequence is that of UPF0173 metal-dependent hydrolase SAOUHSC_01815 from Staphylococcus aureus (strain NCTC 8325 / PS 47).